Reading from the N-terminus, the 378-residue chain is Probable dihydroorotase-like protein (378 aa).

Belongs to the metallo-dependent hydrolases superfamily. DHOase family. PyrC' subfamily.

Non-functional DHOase. The chain is Probable dihydroorotase-like protein (pyrC') from Helicobacter pylori (strain ATCC 700392 / 26695) (Campylobacter pylori).